Here is a 605-residue protein sequence, read N- to C-terminus: Pyruvate decarboxylase 2 (605 aa).

Positions 68 and 155 each coordinate substrate. Positions D433–I515 are thiamine pyrophosphate binding. Mg(2+)-binding residues include D483, N510, and G512. E516 contributes to the substrate binding site.

The protein belongs to the TPP enzyme family. Homotetramer. It depends on a metal cation as a cofactor. The cofactor is thiamine diphosphate.

The enzyme catalyses a 2-oxocarboxylate + H(+) = an aldehyde + CO2. This Oryza sativa subsp. japonica (Rice) protein is Pyruvate decarboxylase 2 (PDC2).